Reading from the N-terminus, the 210-residue chain is Guanylate kinase (210 aa).

Residues 23–203 (GRVVVLSGPS…ACAELVSLLV (181 aa)) enclose the Guanylate kinase-like domain. 30–37 (GPSAVGKS) serves as a coordination point for ATP.

Belongs to the guanylate kinase family.

It is found in the cytoplasm. The catalysed reaction is GMP + ATP = GDP + ADP. In terms of biological role, essential for recycling GMP and indirectly, cGMP. The chain is Guanylate kinase (gmk) from Mycobacterium leprae (strain TN).